We begin with the raw amino-acid sequence, 222 residues long: Noggin (222 aa).

The signal sequence occupies residues 1–19 (MDHSQCLVTIYALMVFLGL). Asn-61 carries an N-linked (GlcNAc...) asparagine glycan. 4 cysteine pairs are disulfide-bonded: Cys-145–Cys-182, Cys-168–Cys-218, Cys-174–Cys-220, and Cys-197–Cys-205.

The protein belongs to the noggin family. Homodimer.

The protein resides in the secreted. Functionally, patterns the embryo by interrupting bone morphogenetic proteins (BMP) signaling. Binds BMP-4 and BMP-2 with high affinity. Can abolish BMP-4 activity by blocking binding to cognate cell-surface receptors. Capable of inducing dorsal development in embryos. Causes dorsal mesodermal differentiation of animal cap ectoderm when coexpressed with xWNT-8 and nuclear, sequence-specific DNA-binding protein xBRA. None of these molecules causes dorsal mesoderm formation when expressed alone. This Xenopus laevis (African clawed frog) protein is Noggin (nog).